Consider the following 83-residue polypeptide: RNA-binding protein Hfq (83 aa).

The Sm domain occupies aspartate 11–valine 71.

This sequence belongs to the Hfq family. As to quaternary structure, homohexamer.

Its function is as follows. RNA chaperone that binds small regulatory RNA (sRNAs) and mRNAs to facilitate mRNA translational regulation in response to envelope stress, environmental stress and changes in metabolite concentrations. Also binds with high specificity to tRNAs. In Methylobacterium radiotolerans (strain ATCC 27329 / DSM 1819 / JCM 2831 / NBRC 15690 / NCIMB 10815 / 0-1), this protein is RNA-binding protein Hfq.